We begin with the raw amino-acid sequence, 188 residues long: UPF0340 protein SSU98_0310 (188 aa).

Belongs to the UPF0340 family.

The polypeptide is UPF0340 protein SSU98_0310 (Streptococcus suis (strain 98HAH33)).